The primary structure comprises 580 residues: Long-chain-fatty-acid--AMP ligase FadD28 (580 aa).

Residues 421–440 (SERTFGGKIVTPSPGTPEGP) are disordered.

Belongs to the ATP-dependent AMP-binding enzyme family.

It catalyses the reaction holo-[mycocerosate synthase] + a long-chain fatty acid + ATP = a long-chain fatty acyl-[mycocerosate synthase] + AMP + diphosphate. The catalysed reaction is a long-chain fatty acid + ATP + H(+) = a long-chain fatty acyl-AMP + diphosphate. It carries out the reaction holo-[mycocerosate synthase] + a long-chain fatty acyl-AMP = a long-chain fatty acyl-[mycocerosate synthase] + AMP + H(+). Its pathway is lipid metabolism; fatty acid biosynthesis. Involved in the biosynthesis of phthiocerol dimycocerosate (PDIM), a cell wall-associated lipid found only in pathogenic mycobacteria. Catalyzes the activation of long-chain fatty acids as acyl-adenylates (acyl-AMP), which are then transferred to the multifunctional polyketide synthase Mas for further chain extension. The polypeptide is Long-chain-fatty-acid--AMP ligase FadD28 (fadD28) (Mycobacterium bovis (strain ATCC BAA-935 / AF2122/97)).